The sequence spans 357 residues: MIVRKSMGRVKSLLMLLMVLGFSFATYNLVFMMMEHKAGNDLGSFDGKAMEIRNTNSKYHVAVTATDAAYSQWQCRIMYYWYKKTKDMPGSAMGKFTRILHSGRGDQLMNEIPTFVVDPLPEGLDRGYIVLNRPWAFVQWLEKAVIDEEYILMAEPDHIFVNPLPNLATENEPAGYPFFYIKPAENEKIMRKFYPKENGPVTDVDPIGNSPVIIHKYMLEEIAPTWVNISLRMKDDPETDKAFGWVLEMYAYAVASALHGIKHILRKDFMLQPPWDLDVGKKFIIHFTYGCDYNLKGKLTYGKIGEWRFDKRSYLMGPPPKNLSLPPPGVPESVVRLVKMVNEATANIPNWDSLNRS.

Residues 13–33 form a helical; Signal-anchor membrane-spanning segment; that stretch reads LLMLLMVLGFSFATYNLVFMM.

Expressed in the vasculature of leaves, petioles, stems and roots. Expressed in the vascular cylinder throughout the root, and nodule vasculature.

It is found in the golgi apparatus membrane. The catalysed reaction is trans-4-hydroxy-L-prolyl-[protein] + UDP-beta-L-arabinofuranose = O-(beta-L-arabinofuranosyl)-trans-4-hydroxy-L-prolyl-[protein] + UDP + H(+). In terms of biological role, probable glycosyltransferase involved in the O-arabinosylation of several proteins including extensins and small signaling peptides. Catalyzes the transfer of the initial L-arabinose to the hydroxyl group of Hyp residues. Probably involved in the arabinosylation of CLE12, a signaling peptide that moves from root to shoot, to interact with SUNN receptor kinase signaling that regulates nodulation. Involved in long distance nodulation signaling events. Involved in the autoregulation of nodulation (AON), a long distance systemic signaling from root to shoot and back again, which allows legumes to limit the number of root nodules formed based on available nitrogen and previous rhizobial colonization. Functions in the root, upstream of the shoot receptor kinase SUNN and via CLE peptide, to control AON. The sequence is that of Hydroxyproline O-arabinosyltransferase RDN1 from Medicago truncatula (Barrel medic).